Here is an 849-residue protein sequence, read N- to C-terminus: MSKLRKKYLEHLLCVLIFFTYVIGYGEAQSKSFLVDCGSNATTEVDGRTWVGDLSPNKSVTLQGFDAITASTSKGSSVYAEIYKTARVFDAVLNYTFEGITQGNYFVRLHFSPFAIENHNVNESSFSVFADGLRLMLDINIAGEIAHKNLILESTGHNATASSLVKEFLLPTGPGKLVLSFIPEKGSFGFVNAIEIVSVDDKLFKESVTKVGGSEVELGLGGRGIETMYRLNVGGPKLGPSKDLKLYRTWETDLSYMVIENAGVEVKNSSNITYALADDSPVAPLLVYETARMMSNTEVLEKRFNISWKFEVDPNFDYLVRLHFCELLVDKQNQRIFRIYINNQTAAGNFDIFAHAGGKNKGIYQDYLDPVSSKNDVLWIQLGPDSSVGASGDALLSGLEIFKLSKNGNLAHLIRFDSTGHSVSDSKMRIIWISVGAGIAIIIFFVFLGILVVCLCKKRRSKSDESKNNPPGWRPLFLHVNNSTANAKATGGSLRLNTLAASTMGRKFTLAEIRAATKNFDDGLAIGVGGFGKVYRGELEDGTLIAIKRATPHSQQGLAEFETEIVMLSRLRHRHLVSLIGFCDEHNEMILVYEYMANGTLRSHLFGSNLPPLSWKQRLEACIGSARGLHYLHTGSERGIIHRDVKTTNILLDENFVAKMSDFGLSKAGPSMDHTHVSTAVKGSFGYLDPEYFRRQQLTEKSDVYSFGVVLFEAVCARAVINPTLPKDQINLAEWALSWQKQRNLESIIDSNLRGNYSPESLEKYGEIAEKCLADEGKNRPMMGEVLWSLEYVLQIHEAWLRKQNGENSFSSSQAVEEAPESFTLPACSNQDSSETEQSQTGSALHNSA.

Positions 1 to 28 are cleaved as a signal peptide; that stretch reads MSKLRKKYLEHLLCVLIFFTYVIGYGEA. The Extracellular portion of the chain corresponds to 29–429; the sequence is QSKSFLVDCG…GHSVSDSKMR (401 aa). Residues asparagine 40, asparagine 57, asparagine 94, asparagine 122, asparagine 158, asparagine 268, asparagine 271, asparagine 305, and asparagine 343 are each glycosylated (N-linked (GlcNAc...) asparagine). Residues 430–450 form a helical membrane-spanning segment; it reads IIWISVGAGIAIIIFFVFLGI. At 451–849 the chain is on the cytoplasmic side; that stretch reads LVVCLCKKRR…QTGSALHNSA (399 aa). Residues 520–793 form the Protein kinase domain; that stretch reads FDDGLAIGVG…GEVLWSLEYV (274 aa). Residues 526 to 534 and lysine 548 each bind ATP; that span reads IGVGGFGKV. Aspartate 644 serves as the catalytic Proton acceptor. Residues 810-849 form a disordered region; that stretch reads FSSSQAVEEAPESFTLPACSNQDSSETEQSQTGSALHNSA. Positions 827-849 are enriched in polar residues; it reads ACSNQDSSETEQSQTGSALHNSA.

This sequence belongs to the protein kinase superfamily. Ser/Thr protein kinase family.

Its subcellular location is the cell membrane. The chain is Probable receptor-like protein kinase At1g30570 from Arabidopsis thaliana (Mouse-ear cress).